Consider the following 81-residue polypeptide: Dermaseptin-B7 (81 aa).

Residues 1–22 form the signal peptide; it reads MASLKKSLFLVLFLGLVSLSIC. Residues 23 to 44 constitute a propeptide that is removed on maturation; it reads EEEKRENEDEEEQEDDEQSEMK. Positions 24–48 are disordered; that stretch reads EEKRENEDEEEQEDDEQSEMKRGLW. Acidic residues predominate over residues 30–40; sequence EDEEEQEDDEQ. Val78 carries the post-translational modification Valine amide. The propeptide occupies 80–81; it reads EQ.

This sequence belongs to the frog skin active peptide (FSAP) family. Dermaseptin subfamily. As to expression, expressed by the skin glands.

Its subcellular location is the secreted. Has antimicrobial activity. In Phyllomedusa bicolor (Two-colored leaf frog), this protein is Dermaseptin-B7 (DRG1).